Consider the following 155-residue polypeptide: V-type proton ATPase 16 kDa proteolipid subunit c (155 aa).

Residues methionine 1 to tyrosine 10 lie on the Lumenal side of the membrane. The helical transmembrane segment at alanine 11–glycine 33 threads the bilayer. Over threonine 34 to serine 55 the chain is Cytoplasmic. Residues isoleucine 56–isoleucine 76 form a helical membrane-spanning segment. Topologically, residues alanine 77–glutamine 92 are lumenal. The helical transmembrane segment at leucine 93–glycine 114 threads the bilayer. At aspartate 115–methionine 131 the chain is on the cytoplasmic side. A helical membrane pass occupies residues isoleucine 132–leucine 152. The Lumenal segment spans residues serine 153 to lysine 155.

This sequence belongs to the V-ATPase proteolipid subunit family. As to quaternary structure, V-ATPase is a heteromultimeric enzyme made up of two complexes: the ATP-hydrolytic V1 complex and the proton translocation V0 complex. The V1 complex consists of three catalytic AB heterodimers that form a heterohexamer, three peripheral stalks each consisting of EG heterodimers, one central rotor including subunits D and F, and the regulatory subunits C and H. The proton translocation complex V0 consists of the proton transport subunit a, a ring of proteolipid subunits c9c'', rotary subunit d, subunits e and f, and the accessory subunits ATP6AP1/Ac45 and ATP6AP2/PRR. Interacts with the V0 complex V-ATPase subunit a4 ATP6V0A4. Interacts with LASS2. Interacts with RNF182; this interaction leads to ubiquitination and degradation via the proteasome pathway. Post-translationally, ubiquitinated by RNF182, leading to its degradation via the ubiquitin-proteasome pathway. Expressed in brain (at protein level).

The protein resides in the cytoplasmic vesicle. It is found in the clathrin-coated vesicle membrane. The protein localises to the secretory vesicle. Its subcellular location is the synaptic vesicle membrane. Proton-conducting pore forming subunit of the V0 complex of vacuolar(H+)-ATPase (V-ATPase), a multisubunit enzyme composed of a peripheral complex (V1) that hydrolyzes ATP and a membrane integral complex (V0) that translocates protons. V-ATPase is responsible for acidifying and maintaining the pH of intracellular compartments and in some cell types, is targeted to the plasma membrane, where it is responsible for acidifying the extracellular environment. The sequence is that of V-type proton ATPase 16 kDa proteolipid subunit c (ATP6V0C) from Bos taurus (Bovine).